The chain runs to 183 residues: Potassium-transporting ATPase KdpC subunit (183 aa).

Residues 10 to 30 (ASLLVLSLVTGVAYPLLVTGI) form a helical membrane-spanning segment.

The protein belongs to the KdpC family. The system is composed of three essential subunits: KdpA, KdpB and KdpC.

The protein localises to the cell inner membrane. Part of the high-affinity ATP-driven potassium transport (or Kdp) system, which catalyzes the hydrolysis of ATP coupled with the electrogenic transport of potassium into the cytoplasm. This subunit acts as a catalytic chaperone that increases the ATP-binding affinity of the ATP-hydrolyzing subunit KdpB by the formation of a transient KdpB/KdpC/ATP ternary complex. The chain is Potassium-transporting ATPase KdpC subunit from Pseudomonas aeruginosa (strain UCBPP-PA14).